Here is a 193-residue protein sequence, read N- to C-terminus: MTIKLIVGLGNPGKNYKYHRHNVGFWFCDALAKLYAGNFKKRTKFFGEVTQINIFNHKIQLLKPTTFMNCSGQSIQSIANFYQINADEILIVHDELNINPGIAKIKSGGSHGGHNGLKNTIKILETKAFYRLRIGIGHPGNKLPIVDFVLNTPSKDELDKIQNALNNSLQVIEDVIKNNLDKVIKTLQKKEII.

Tyr16 is a binding site for tRNA. His21 acts as the Proton acceptor in catalysis. 3 residues coordinate tRNA: Phe67, Asn69, and Asn115.

Belongs to the PTH family. As to quaternary structure, monomer.

It is found in the cytoplasm. It catalyses the reaction an N-acyl-L-alpha-aminoacyl-tRNA + H2O = an N-acyl-L-amino acid + a tRNA + H(+). In terms of biological role, hydrolyzes ribosome-free peptidyl-tRNAs (with 1 or more amino acids incorporated), which drop off the ribosome during protein synthesis, or as a result of ribosome stalling. Its function is as follows. Catalyzes the release of premature peptidyl moieties from peptidyl-tRNA molecules trapped in stalled 50S ribosomal subunits, and thus maintains levels of free tRNAs and 50S ribosomes. This Vesicomyosocius okutanii subsp. Calyptogena okutanii (strain HA) protein is Peptidyl-tRNA hydrolase.